Consider the following 92-residue polypeptide: uncharacterized protein (92 aa).

Residues 25–83 (LEEKLKQEKIDRKYLAQVTNIPYTTVSRIMRAEANREFNPEIDTILKIAKYFNCTMDEV) enclose the HTH cro/C1-type domain. Residues 36–55 (RKYLAQVTNIPYTTVSRIMR) constitute a DNA-binding region (H-T-H motif).

This is an uncharacterized protein from Rickettsia prowazekii (strain Madrid E).